Consider the following 102-residue polypeptide: Outer membrane protein assembly factor BamE (102 aa).

A signal peptide spans 1–20 (MNNYIKALLIIICFSSCSIS).

The protein belongs to the BamE family. In terms of assembly, part of the Bam complex.

Its subcellular location is the cell outer membrane. Its function is as follows. Part of the outer membrane protein assembly complex, which is involved in assembly and insertion of beta-barrel proteins into the outer membrane. This chain is Outer membrane protein assembly factor BamE, found in Buchnera aphidicola subsp. Acyrthosiphon pisum (strain APS) (Acyrthosiphon pisum symbiotic bacterium).